The sequence spans 390 residues: Chalcone synthase (390 aa).

Cysteine 164 is a catalytic residue.

It belongs to the thiolase-like superfamily. Chalcone/stilbene synthases family.

It catalyses the reaction (E)-4-coumaroyl-CoA + 3 malonyl-CoA + 3 H(+) = 2',4,4',6'-tetrahydroxychalcone + 3 CO2 + 4 CoA. It functions in the pathway secondary metabolite biosynthesis; flavonoid biosynthesis. In terms of biological role, the primary product of this enzyme is 4,2',4',6'-tetrahydroxychalcone (also termed naringenin-chalcone or chalcone) which undergoes enzyme-catalyzed or spontaneous isomerization into naringenin. The protein is Chalcone synthase of Hypericum androsaemum (Tutsan).